A 346-amino-acid polypeptide reads, in one-letter code: GTPase Obg (346 aa).

In terms of domain architecture, Obg spans 1–158 (MFVDECVVKL…GTYRLVLKSI (158 aa)). Residues 159 to 332 (ADVGLVGFPN…LKKELLKRVT (174 aa)) form the OBG-type G domain. GTP is bound by residues 165–172 (GFPNAGKS), 190–194 (FTTLH), 216–219 (DVPG), 286–289 (NKMD), and 313–315 (SCL). Mg(2+) is bound by residues S172 and T192.

It belongs to the TRAFAC class OBG-HflX-like GTPase superfamily. OBG GTPase family. As to quaternary structure, monomer. Mg(2+) serves as cofactor.

The protein localises to the cytoplasm. Its function is as follows. An essential GTPase which binds GTP, GDP and possibly (p)ppGpp with moderate affinity, with high nucleotide exchange rates and a fairly low GTP hydrolysis rate. Plays a role in control of the cell cycle, stress response, ribosome biogenesis and in those bacteria that undergo differentiation, in morphogenesis control. The sequence is that of GTPase Obg from Opitutus terrae (strain DSM 11246 / JCM 15787 / PB90-1).